A 289-amino-acid chain; its full sequence is MAISIKGVNTGVIRKSNNFIALALKIKEPRNKESLFFMSVMELRDLLIALESRLHQKHKLDAAAHLQYEQARDKVIKKMAENIPEILVDELKNADINRRVNTLELTDNQGENLTFVLTLHDGSKCELVVNELQIEMLARAIIHAINNAEMRELALRITSLLDFLPLYDVDCQDNGNLEYDTYSQPEWKHNLFDHYLAVLYRFKDESGKEQFSGAVVKTREATPGKEIEAITRRMLDFSPRLKKLAGVPCQVYVRTVAANNAQPLTQDQCLRALHHLRVQSTSKTAPQAK.

This is an uncharacterized protein from Escherichia coli (strain K12).